A 66-amino-acid polypeptide reads, in one-letter code: DNA-directed RNA polymerase subunit Rpo10 (66 aa).

Zn(2+) contacts are provided by Cys-7, Cys-10, Cys-44, and Cys-45.

Belongs to the archaeal Rpo10/eukaryotic RPB10 RNA polymerase subunit family. As to quaternary structure, part of the RNA polymerase complex. The cofactor is Zn(2+).

Its subcellular location is the cytoplasm. It catalyses the reaction RNA(n) + a ribonucleoside 5'-triphosphate = RNA(n+1) + diphosphate. In terms of biological role, DNA-dependent RNA polymerase (RNAP) catalyzes the transcription of DNA into RNA using the four ribonucleoside triphosphates as substrates. In Saccharolobus islandicus (strain Y.N.15.51 / Yellowstone #2) (Sulfolobus islandicus), this protein is DNA-directed RNA polymerase subunit Rpo10.